A 409-amino-acid polypeptide reads, in one-letter code: Inner membrane transport protein YqeG (409 aa).

Residues 1-25 are Periplasmic-facing; the sequence is MSNIWSKEETLWSFALYGTAVGAGT. A helical membrane pass occupies residues 26 to 46; sequence LFLPIQLGSAGAVVLFITALV. Over 47 to 87 the chain is Cytoplasmic; it reads AWPLTYWPHKALCQFILSSKTSAGEGITGAVTHYYGKKIGN. A helical transmembrane segment spans residues 88-108; that stretch reads LITTLYFIAFFVVVLIYAVAI. The Periplasmic segment spans residues 109 to 127; the sequence is TNSLTEQLAKHMVIDLRIR. The chain crosses the membrane as a helical span at residues 128 to 148; sequence MLVSLGVVLILNLIFLMGRHA. The Cytoplasmic segment spans residues 149–151; that stretch reads TIR. A helical membrane pass occupies residues 152 to 172; sequence VMGFLVFPLIAYFLFLSIYLV. The Periplasmic segment spans residues 173 to 193; sequence GSWQPDLLTTQVEFNQNTLHQ. Residues 194-214 form a helical membrane-spanning segment; it reads IWISIPVMVFAFSHTPIISTF. Over 215-235 the chain is Cytoplasmic; sequence AIDRREKYGEHAMDKCKKIMK. A helical transmembrane segment spans residues 236–256; that stretch reads VAYLIICISVLFFVFSCLLSI. At 257–276 the chain is on the periplasmic side; that stretch reads PPSYIEAAKEEGVTILSALS. A helical transmembrane segment spans residues 277–297; that stretch reads MLPNAPAWLSISGIIVAVVAM. Residues 298-329 lie on the Cytoplasmic side of the membrane; it reads SKSFLGTYFGVIEGATEVVKTTLQQVGVKKSR. The chain crosses the membrane as a helical span at residues 330-350; sequence AFNRALSIMLVSLITFIVCCI. Over 351–353 the chain is Periplasmic; sequence NPN. Residues 354–374 traverse the membrane as a helical segment; it reads AISMIYAISGPLIAMILFIMP. Residues 375-388 lie on the Cytoplasmic side of the membrane; it reads TLSTYLIPALKPWR. The helical transmembrane segment at 389–409 threads the bilayer; it reads SIGNLITLIVGILCVSVMFFS.

It belongs to the amino acid/polyamine transporter 2 family. SdaC/TdcC subfamily.

The protein localises to the cell inner membrane. The sequence is that of Inner membrane transport protein YqeG (yqeG) from Escherichia coli O6:H1 (strain CFT073 / ATCC 700928 / UPEC).